The primary structure comprises 124 residues: MSYIPGQPVTAVVQRVEIHKLRQGENLILGFSIGGGIDQDPSQNPFSEDKTDKGIYVTRVSEGGPAEIAGLQIGDKIMQVNGWDMTMVTHDQARKRLTKRSEEVVRLLVTRQSLQKAVQQSMLS.

An N-acetylserine modification is found at serine 2. In terms of domain architecture, PDZ spans 15–112 (RVEIHKLRQG…EVVRLLVTRQ (98 aa)). Serine 61 carries the post-translational modification Phosphoserine.

As to quaternary structure, interacts (via its PDZ domain) with GLS2. Interacts (via its PDZ domain) with RTKN (via the C-terminal region); this interaction facilitates Rho-mediated activation of the FOS serum response element (SRE). Interacts (via its PDZ domain) with CTNNB1; this interaction inhibits the transcriptional activity of CTNNB1. Interacts with HTLV-1 TAX protein. Interacts (via PDZ domain) with ARHGEF16. Interacts (via PDZ domain) with KCNJ4 (via C-terminus). Competes with LIN7A for KCNJ4 binding. Interacts with ADGRB2. As to expression, ubiquitous. Detected in brain, heart, kidney, lung, small intestine and skeletal muscle. Detected in various cell lines including HeLa. Weakly expressed in peripheral blood leukocytes.

Its subcellular location is the cytoplasm. The protein localises to the nucleus. It is found in the cell membrane. In terms of biological role, may regulate a number of protein-protein interactions by competing for PDZ domain binding sites. Binds CTNNB1 and may thereby act as an inhibitor of the Wnt signaling pathway. Competes with LIN7A for KCNJ4 binding, and thereby promotes KCNJ4 internalization. May play a role in the Rho signaling pathway. May play a role in activation of CDC42 by the viral protein HPV16 E6. This is Tax1-binding protein 3 from Homo sapiens (Human).